The following is a 432-amino-acid chain: MGNNVVVLGTQWGDEGKGKIVDLLTEDAKYVVRYQGGHNAGHTLVIDGQKTVLHLIPSGILRNNVKCIIGNGVVLSPEALIKEMSGLEERGVPVRERLFISEACPLILPYHVALDQAREAARGKKAIGTTGRGIGPAYEDKVARRGLRVGDLFDMASFAEKLQEVMAFHNFQLEHFYKVEPVSYEAVLEQAKGYAELLTSMVIDVTNELDAARKRGDKIMFEGAQGTLLDIDHGTYPYVTSSNTTAGGVAAGSGFGPRHLGYILGIAKAYCTRVGAGPFPTELFDEVGDHLGTKGHEFGATTGRKRRCGWFDAVAMRRAIQINSVTGFCLTKLDVLDGLKEIKICTGYQMPDGSIAEVSPMAADAFENVTPIFETMPGWSETTFGAKTLAELPQTALDYIKRIEELTGVPVDIISTGPDRNETIIKVHPFSA.

GTP is bound by residues 13–19 (GDEGKGK) and 41–43 (GHT). Asp14 (proton acceptor) is an active-site residue. Mg(2+) contacts are provided by Asp14 and Gly41. IMP-binding positions include 14-17 (DEGK), 39-42 (NAGH), Thr130, Arg144, Gln225, Thr240, and Arg304. His42 serves as the catalytic Proton donor. 300 to 306 (ATTGRKR) provides a ligand contact to substrate. Residues Arg306, 332–334 (KLD), and 415–417 (STG) contribute to the GTP site.

The protein belongs to the adenylosuccinate synthetase family. In terms of assembly, homodimer. Mg(2+) serves as cofactor.

The protein localises to the cytoplasm. The enzyme catalyses IMP + L-aspartate + GTP = N(6)-(1,2-dicarboxyethyl)-AMP + GDP + phosphate + 2 H(+). It participates in purine metabolism; AMP biosynthesis via de novo pathway; AMP from IMP: step 1/2. Functionally, plays an important role in the de novo pathway of purine nucleotide biosynthesis. Catalyzes the first committed step in the biosynthesis of AMP from IMP. This is Adenylosuccinate synthetase from Vibrio cholerae serotype O1 (strain ATCC 39541 / Classical Ogawa 395 / O395).